A 1024-amino-acid polypeptide reads, in one-letter code: Beta-galactosidase (1024 aa).

Residues N103 and D202 each coordinate substrate. D202 contacts Na(+). Positions 417, 419, and 462 each coordinate Mg(2+). Residues E462 and 538-541 each bind substrate; that span reads EYAH. E462 functions as the Proton donor in the catalytic mechanism. E538 acts as the Nucleophile in catalysis. N598 contacts Mg(2+). F602 and N605 together coordinate Na(+). 2 residues coordinate substrate: N605 and W1000.

The protein belongs to the glycosyl hydrolase 2 family. Homotetramer. Requires Mg(2+) as cofactor. The cofactor is Mn(2+). Na(+) serves as cofactor.

The enzyme catalyses Hydrolysis of terminal non-reducing beta-D-galactose residues in beta-D-galactosides.. Its activity is regulated as follows. Inhibited by phenylethyl thio-beta-D-galactoside (PETG), isopropyl thio-beta-D-galactoside (IPTG), L-ribose, D-galactonolactone, lactose and 2-amino-D-galactose. This is Beta-galactosidase (lacZ) from Escherichia coli (strain K12).